The chain runs to 73 residues: Crustacean hyperglycemic hormone (73 aa).

Disulfide bonds link Cys7-Cys43, Cys23-Cys39, and Cys26-Cys52. Residue Val73 is modified to Valine amide.

This sequence belongs to the arthropod CHH/MIH/GIH/VIH hormone family. In terms of tissue distribution, produced by the medulla terminalis X-organ in the eyestalks and transported to the sinus gland where they are stored and released.

It is found in the secreted. Its function is as follows. Hormone found in the sinus gland of isopods and decapods which controls the blood sugar level. Has a secretagogue action over the amylase released from the midgut gland. May act as a stress hormone and may be involved in the control of molting and reproduction. The chain is Crustacean hyperglycemic hormone from Jasus lalandii (Cape rock lobster).